Reading from the N-terminus, the 123-residue chain is KEDSCQLGYSQGPCLGMFKRYFYNGTSMACETFYYGGCMGNGNNFPSEKECLQTCRTVQACNLPIVRGPCRAGIELWAFDAVKGKCVRFIYGGCNGNGNQFYSQKECKEYCGIPGEADEELLR.

BPTI/Kunitz inhibitor domains lie at 5-55 (CQLG…LQTC) and 61-111 (CNLP…KEYC). Intrachain disulfides connect Cys-5/Cys-55, Cys-14/Cys-38, Cys-30/Cys-51, Cys-61/Cys-111, Cys-70/Cys-94, and Cys-86/Cys-107. Asn-24 is a glycosylation site (N-linked (GlcNAc...) asparagine).

The protein resides in the secreted. Its function is as follows. This inhibitory fragment, released from native ITI after limited proteolysis with trypsin, contains two homologous domains. Whereas the second domain is a strong inhibitor of trypsin, the first domain interacts weakly with PMN-granulocytic elastase and not at all with pancreatic elastase. The polypeptide is Inter-alpha-trypsin inhibitor (Capra hircus (Goat)).